The primary structure comprises 369 residues: Anhydro-N-acetylmuramic acid kinase (369 aa).

Position 12-19 (12-19 (GTSLDGVD)) interacts with ATP.

It belongs to the anhydro-N-acetylmuramic acid kinase family.

It catalyses the reaction 1,6-anhydro-N-acetyl-beta-muramate + ATP + H2O = N-acetyl-D-muramate 6-phosphate + ADP + H(+). It functions in the pathway amino-sugar metabolism; 1,6-anhydro-N-acetylmuramate degradation. The protein operates within cell wall biogenesis; peptidoglycan recycling. In terms of biological role, catalyzes the specific phosphorylation of 1,6-anhydro-N-acetylmuramic acid (anhMurNAc) with the simultaneous cleavage of the 1,6-anhydro ring, generating MurNAc-6-P. Is required for the utilization of anhMurNAc either imported from the medium or derived from its own cell wall murein, and thus plays a role in cell wall recycling. This is Anhydro-N-acetylmuramic acid kinase from Shigella boydii serotype 4 (strain Sb227).